The primary structure comprises 241 residues: Small ribosomal subunit protein uS3 (241 aa).

Residues Ile39–Arg107 enclose the KH type-2 domain. The segment at Ala214–Ala241 is disordered.

The protein belongs to the universal ribosomal protein uS3 family. Part of the 30S ribosomal subunit. Forms a tight complex with proteins S10 and S14.

Binds the lower part of the 30S subunit head. Binds mRNA in the 70S ribosome, positioning it for translation. This chain is Small ribosomal subunit protein uS3, found in Mesorhizobium japonicum (strain LMG 29417 / CECT 9101 / MAFF 303099) (Mesorhizobium loti (strain MAFF 303099)).